Here is a 369-residue protein sequence, read N- to C-terminus: Glycine oxidase (369 aa).

FAD is bound by residues 14-15, 34-35, 42-43, 47-49, and V174; these read II, ES, AT, and AGM. The substrate site is built by R302 and R329. Residue 327–333 participates in FAD binding; the sequence is HFRNGIL.

It belongs to the DAO family. ThiO subfamily. In terms of assembly, homotetramer. FAD is required as a cofactor.

It carries out the reaction glycine + O2 + H2O = glyoxylate + H2O2 + NH4(+). It catalyses the reaction glyphosate + O2 + H2O = aminomethylphosphonate + glyoxylate + H2O2 + H(+). The enzyme catalyses N-ethylglycine + O2 + H2O = ethylamine + glyoxylate + H2O2. The catalysed reaction is sarcosine + O2 + H2O = methylamine + glyoxylate + H2O2. It carries out the reaction D-alanine + O2 + H2O = pyruvate + H2O2 + NH4(+). It functions in the pathway cofactor biosynthesis; thiamine diphosphate biosynthesis. In terms of biological role, catalyzes the FAD-dependent oxidative deamination of glycine, leading to glyoxylate, ammonia and hydrogen peroxide. Is also able to act on various amines and D-amino acids to yield the corresponding alpha-keto acids, ammonia/amine, and hydrogen peroxide. Can also oxidize the herbicide glyphosate (N-phosphonomethylglycine), and thus may be involved in the degradation pathway that allows B.licheniformis J33-8 to grow with glyphosate as the sole source of carbon. Is essential for thiamine biosynthesis since the oxidation of glycine catalyzed by ThiO generates the glycine imine intermediate (dehydroglycine) required for the biosynthesis of the thiazole ring of thiamine pyrophosphate. In Bacillus licheniformis, this protein is Glycine oxidase.